Here is a 371-residue protein sequence, read N- to C-terminus: Mitogen-activated protein kinase homolog NTF6 (371 aa).

The region spanning 38–324 (IPPIQPVGRG…VEDALNHPFL (287 aa)) is the Protein kinase domain. Residues 44–52 (VGRGAYGMV) and K67 contribute to the ATP site. Catalysis depends on D164, which acts as the Proton acceptor. The residue at position 196 (T196) is a Phosphothreonine. The TXY signature appears at 196 to 198 (TEY). Y198 carries the phosphotyrosine modification.

It belongs to the protein kinase superfamily. CMGC Ser/Thr protein kinase family. MAP kinase subfamily. It depends on Mg(2+) as a cofactor. Dually phosphorylated on Thr-196 and Tyr-198, which activates the enzyme. Very low autophosphorylation, although dramatically increased when Mn(2+) is added to the reaction instead of Mg(2+).

It carries out the reaction L-seryl-[protein] + ATP = O-phospho-L-seryl-[protein] + ADP + H(+). It catalyses the reaction L-threonyl-[protein] + ATP = O-phospho-L-threonyl-[protein] + ADP + H(+). Its activity is regulated as follows. Activated by tyrosine and threonine phosphorylation. This Nicotiana tabacum (Common tobacco) protein is Mitogen-activated protein kinase homolog NTF6 (NTF6).